A 226-amino-acid polypeptide reads, in one-letter code: Enolase-phosphatase E1 (226 aa).

The protein belongs to the HAD-like hydrolase superfamily. MasA/MtnC family. Monomer. The cofactor is Mg(2+).

It carries out the reaction 5-methylsulfanyl-2,3-dioxopentyl phosphate + H2O = 1,2-dihydroxy-5-(methylsulfanyl)pent-1-en-3-one + phosphate. It functions in the pathway amino-acid biosynthesis; L-methionine biosynthesis via salvage pathway; L-methionine from S-methyl-5-thio-alpha-D-ribose 1-phosphate: step 3/6. It participates in amino-acid biosynthesis; L-methionine biosynthesis via salvage pathway; L-methionine from S-methyl-5-thio-alpha-D-ribose 1-phosphate: step 4/6. In terms of biological role, bifunctional enzyme that catalyzes the enolization of 2,3-diketo-5-methylthiopentyl-1-phosphate (DK-MTP-1-P) into the intermediate 2-hydroxy-3-keto-5-methylthiopentenyl-1-phosphate (HK-MTPenyl-1-P), which is then dephosphorylated to form the acireductone 1,2-dihydroxy-3-keto-5-methylthiopentene (DHK-MTPene). This Shewanella sp. (strain ANA-3) protein is Enolase-phosphatase E1.